Reading from the N-terminus, the 91-residue chain is Large ribosomal subunit protein bL31B (91 aa).

The protein belongs to the bacterial ribosomal protein bL31 family. Type B subfamily. In terms of assembly, part of the 50S ribosomal subunit.

This is Large ribosomal subunit protein bL31B from Neisseria gonorrhoeae (strain NCCP11945).